A 313-amino-acid polypeptide reads, in one-letter code: Ribosomal RNA small subunit methyltransferase H (313 aa).

S-adenosyl-L-methionine is bound by residues 35–37 (GGH), Asp-55, Phe-79, Asp-101, and Gln-108.

The protein belongs to the methyltransferase superfamily. RsmH family.

The protein resides in the cytoplasm. The catalysed reaction is cytidine(1402) in 16S rRNA + S-adenosyl-L-methionine = N(4)-methylcytidine(1402) in 16S rRNA + S-adenosyl-L-homocysteine + H(+). Specifically methylates the N4 position of cytidine in position 1402 (C1402) of 16S rRNA. This is Ribosomal RNA small subunit methyltransferase H from Klebsiella pneumoniae subsp. pneumoniae (strain ATCC 700721 / MGH 78578).